The chain runs to 298 residues: Max-like protein X (298 aa).

A disordered region spans residues Met1–His63. Ser7 is modified (phosphoserine). Positions Gly28 to Gly37 are enriched in basic residues. Phosphoserine is present on residues Ser45, Ser48, Ser74, Ser77, and Ser98. The segment at Ser91–Ile145 is disordered. The segment covering Ser94–Asn109 has biased composition (polar residues). Basic and acidic residues-rich tracts occupy residues Asp116–Lys127 and Thr135–Ile145. The bHLH domain occupies Arg129 to Leu187. Residues Lys140–Gln160 are leucine-zipper.

As to quaternary structure, efficient DNA binding requires dimerization with another bHLH protein. Binds DNA as a heterodimer with MAD1, MAD4, MNT, WBSCR14 and MLXIP. Can also bind DNA as a homodimer. In terms of tissue distribution, expressed in all tissues tested, including spleen, thymus, prostate, ovary, intestine, colon, peripheral blood leukocyte, heart, liver, skeletal muscle and kidney. Lower levels of expression in testis, brain, placenta and lung.

Its subcellular location is the cytoplasm. It localises to the nucleus. Its function is as follows. Transcription regulator. Forms a sequence-specific DNA-binding protein complex with MAD1, MAD4, MNT, WBSCR14 and MLXIP which recognizes the core sequence 5'-CACGTG-3'. The TCFL4-MAD1, TCFL4-MAD4, TCFL4-WBSCR14 complexes are transcriptional repressors. Plays a role in transcriptional activation of glycolytic target genes. Involved in glucose-responsive gene regulation. In Homo sapiens (Human), this protein is Max-like protein X (MLX).